A 745-amino-acid chain; its full sequence is Heterogeneous nuclear ribonucleoprotein U-like protein 2 (745 aa).

Residues 3–37 form the SAP domain; it reads VKRLKVTELRSELQRRGLDSRGLKMDLAQRLQEAL. Disordered stretches follow at residues 44–239 and 625–664; these read DEAG…DEEE and EEAR…GQRR. The span at 73–97 shows a compositional bias: acidic residues; that stretch reads GDEEEEDDDEEEDEEALLEDEDEEP. Residues 142-161 show a composition bias toward basic and acidic residues; the sequence is GEEHDNGKGEEDGPEERSGD. A Phosphoserine modification is found at Ser-159. Phosphothreonine is present on Thr-163. Phosphoserine is present on residues Ser-166, Ser-183, Ser-186, Ser-224, and Ser-226. Positions 183–221 are enriched in basic and acidic residues; that stretch reads SEKSKPAGSDGERRGVKRQRDEKDEHGRAYYEFREEAYH. A B30.2/SPRY domain is found at 224-417; sequence SKSPPPPEEE…VELNFGQKEE (194 aa). Acidic residues predominate over residues 230-239; that stretch reads PEEEAKDEEE. Residues 625-637 show a composition bias toward basic and acidic residues; that stretch reads EEARKLLPPSEKR. Basic residues predominate over residues 638–652; sequence TNRRNNRNKRNRQNR. Omega-N-methylarginine is present on residues Arg-654, Arg-682, Arg-736, and Arg-745.

In terms of assembly, binds to MLF1 and retains it in the nucleus.

It is found in the nucleus. In Mus musculus (Mouse), this protein is Heterogeneous nuclear ribonucleoprotein U-like protein 2 (Hnrnpul2).